We begin with the raw amino-acid sequence, 348 residues long: Cuticle collagen rol-6 (348 aa).

The segment at 76 to 348 (GYGATGVQPP…SARRHRKFQL (273 aa)) is disordered. The segment covering 120–137 (PGGGFPDGPFPNGGGPRG) has biased composition (gly residues). 4 triple-helical region regions span residues 152–178 (GPAG…DGKD), 196–258 (GPLG…DGER), 261–284 (GRPG…TGRD), and 288–323 (GQSG…PGKD). Residues 194–231 (PQGPLGPQGPNGAPGLRGMRGARGQPGRPGRDGNPGMP) are compositionally biased toward low complexity. The segment covering 297 to 306 (GLQGYGGAAG) has biased composition (gly residues). Positions 322–338 (KDAEYCKCPGREGDAGR) are enriched in basic and acidic residues. A compositionally biased stretch (basic residues) spans 339–348 (SARRHRKFQL).

Belongs to the cuticular collagen family. As to quaternary structure, collagen polypeptide chains are complexed within the cuticle by disulfide bonds and other types of covalent cross-links. Localizes in stripes along the alae.

Its function is as follows. Nematode cuticles are composed largely of collagen-like proteins. The cuticle functions both as an exoskeleton and as a barrier to protect the worm from its environment. May play a role in cuticle remodeling in response to the environment. Involved in body morphogenesis. In Caenorhabditis elegans, this protein is Cuticle collagen rol-6 (rol-6).